The sequence spans 64 residues: Large ribosomal subunit protein bL33m (64 aa).

Belongs to the bacterial ribosomal protein bL33 family. Component of the mitochondrial ribosome large subunit (39S) which comprises a 16S rRNA and about 50 distinct proteins.

The protein resides in the mitochondrion. The chain is Large ribosomal subunit protein bL33m (mRpL33) from Drosophila melanogaster (Fruit fly).